The sequence spans 2387 residues: Highly reducing polyketide synthase curS1 (2387 aa).

The Ketosynthase family 3 (KS3) domain maps to 10-433 (DVPIAVVGLS…GTNGHVVLES (424 aa)). Active-site for beta-ketoacyl synthase activity residues include Cys182, His316, and His356. Residues 551 to 891 (FVFTGQGAQW…ELASELFLKG (341 aa)) form a malonyl-CoA:ACP transacylase (MAT) domain region. The active-site For malonyltransferase activity is the Ser641. Positions 940–1075 (KSIIGAQVPM…GLITIDYAET (136 aa)) are N-terminal hotdog fold. In terms of domain architecture, PKS/mFAS DH spans 940-1259 (KSIIGAQVPM…VSELENDSGE (320 aa)). A dehydratase (DH) domain region spans residues 942 to 1256 (IIGAQVPMMD…DYRVSELEND (315 aa)). His972 acts as the Proton acceptor; for dehydratase activity in catalysis. The C-terminal hotdog fold stretch occupies residues 1103–1259 (SYTYSKEDFY…VSELENDSGE (157 aa)). Catalysis depends on Asp1169, which acts as the Proton donor; for dehydratase activity. The segment at 1673-1987 (GLMDTLTFIE…QGKHRGKLVL (315 aa)) is enoylreductase (ER) domain. A catalytic ketoreductase (KRc) domain region spans residues 2011-2191 (STYLFIGGLG…VAVDLGIMRD (181 aa)). Residues 2302-2379 (EAVVIITDAL…VFAGKIAEKS (78 aa)) form the Carrier domain. Ser2339 is modified (O-(pantetheine 4'-phosphoryl)serine).

It functions in the pathway mycotoxin biosynthesis. Functionally, highly reducing polyketide synthase; part of the gene cluster that mediates the biosynthesis of 10,11-dehydrocurvularin, a prevalent fungal phytotoxin with heat shock response and immune-modulatory activities. The highly reducing polyketide synthase curS1 is responsible for biosynthesis up to the tetraketide stage. The non-reducing polyketide synthase curS2 then conducts four additional chain extension cycles, producing the unreduced part of the nascent octaketide from C-1 to C-8 in 10,11-dehydrocurvularin. This is Highly reducing polyketide synthase curS1 from Aspergillus terreus.